The following is a 961-amino-acid chain: Translation initiation factor IF-2 (961 aa).

The span at 146 to 158 (PSVPNKTLTTTPH) shows a compositional bias: polar residues. The disordered stretch occupies residues 146 to 373 (PSVPNKTLTT…KTTSQVTTQP (228 aa)). Over residues 163–176 (NHSEKDVLESHDSS) the composition is skewed to basic and acidic residues. Positions 177 to 187 (NKNIKQSSSQN) are enriched in low complexity. Residues 230-239 (SEEKNVDIQQ) are compositionally biased toward basic and acidic residues. Composition is skewed to polar residues over residues 241-285 (EIPS…TAPH) and 301-310 (YQGQNRNNFI). Over residues 355–364 (NRGRKRHKQK) the composition is skewed to basic residues. The tr-type G domain occupies 460–627 (RRPPVVTIMG…LLALQTDILE (168 aa)). Positions 469-476 (GHVDHGKT) are G1. Position 469-476 (469-476 (GHVDHGKT)) interacts with GTP. A G2 region spans residues 494 to 498 (GITQH). Residues 515-518 (DTPG) are G3. GTP is bound by residues 515–519 (DTPGH) and 569–572 (NKMD). The tract at residues 569–572 (NKMD) is G4. The tract at residues 605–607 (SAK) is G5.

Belongs to the TRAFAC class translation factor GTPase superfamily. Classic translation factor GTPase family. IF-2 subfamily.

It is found in the cytoplasm. Its function is as follows. One of the essential components for the initiation of protein synthesis. Protects formylmethionyl-tRNA from spontaneous hydrolysis and promotes its binding to the 30S ribosomal subunits. Also involved in the hydrolysis of GTP during the formation of the 70S ribosomal complex. This Lawsonia intracellularis (strain PHE/MN1-00) protein is Translation initiation factor IF-2.